Reading from the N-terminus, the 270-residue chain is Tryptophan 2,3-dioxygenase-like protein (270 aa).

The protein belongs to the tryptophan 2,3-dioxygenase family.

This is Tryptophan 2,3-dioxygenase-like protein from Xanthomonas campestris pv. campestris (strain 8004).